A 997-amino-acid polypeptide reads, in one-letter code: Autophagy-related protein 9 (997 aa).

The Cytoplasmic segment spans residues 1 to 318 (MERDEYQLPN…DVYNYYLGNG (318 aa)). Position 19 is a phosphoserine; by ATG1 (S19). Positions 29 to 39 (VNPSLNSQEMS) are enriched in polar residues. A disordered region spans residues 29–88 (VNPSLNSQEMSNFPLPDIERGSSLLHSTNDSREDVDENDLRVPESDQGTSTEEEDEVDEE). A compositionally biased stretch (acidic residues) spans 79 to 88 (TEEEDEVDEE). Residues K113 and K121 each participate in a glycyl lysine isopeptide (Lys-Gly) (interchain with G-Cter in ubiquitin) cross-link. The residue at position 122 (S122) is a Phosphoserine. Disordered regions lie at residues 128–159 (VEGS…DGFD) and 213–235 (IHHD…QKHG). Residue K138 forms a Glycyl lysine isopeptide (Lys-Gly) (interchain with G-Cter in ubiquitin) linkage. S143 and S144 each carry phosphoserine. Residues 144–159 (SEEEEDNEFINNDGFD) show a composition bias toward acidic residues. A compositionally biased stretch (polar residues) spans 221–233 (ANNGPRNINGNQK). A helical membrane pass occupies residues 319 to 339 (FYCIILEKILNICTLLFVVFV). At 340-376 (STYMGHCVDYSKLPTSHRVSDIIIDKCYSNSITGFTK) the chain is on the lumenal side. A helical membrane pass occupies residues 377–397 (FFLWMFYFFVILKIVQLYFDV). Residues 398–538 (QKLSELQNFY…EELQKRFMLA (141 aa)) are Cytoplasmic-facing. An intramembrane segment occupies 539–559 (GFLNIILAPFLVTYFVLLYFF). Residues 560–620 (RYFNEYKTSP…DQFPKEKTNL (61 aa)) are Cytoplasmic-facing. A helical transmembrane segment spans residues 621 to 641 (FLKFVSFICGSFVAILAFLTV). Residues 642 to 656 (FDPENFLNFEITSDR) are Lumenal-facing. Position 657 is a phosphoserine; by ATG1 (S657). Residues 657 to 677 (SVIFYITILGAIWSVSRNTIT) traverse the membrane as a helical segment. Residues 678 to 723 (QEYHVFDPEETLKELYEYTHYLPKEWEGRYHKEEIKLEFCKLYNLR) are Cytoplasmic-facing. Residue K701 forms a Glycyl lysine isopeptide (Lys-Gly) (interchain with G-Cter in ubiquitin) linkage. An intramembrane segment occupies 724 to 744 (IVILLRELTSLMITPFVLWFS). At 745–997 (LPSSAGRIVD…EYYKKSDVGR (253 aa)) the chain is on the cytoplasmic side. A phosphoserine mark is found at S787 and S792. T794 carries the post-translational modification Phosphothreonine. S802 is modified (phosphoserine; by ATG1). At T804 the chain carries Phosphothreonine; by ATG1. 2 positions are modified to phosphoserine; by ATG1: S831 and S842. S864 bears the Phosphoserine mark. Phosphoserine; by ATG1 occurs at positions 948 and 969.

This sequence belongs to the ATG9 family. As to quaternary structure, homotrimer; forms a homotrimer with a central pore that forms a path between the two membrane leaflets. Interacts with ATG23 and ATG27 to form a cycling complex for trafficking to the PAS. Interacts (via N-terminus) with ATG11, required for recruitment of ATG9 to the PAS for the Cvt pathway during nutrient-rich conditions. Interacts (via N-terminus) with ATG17; required for recruitment to the PAS during autophagy and starved conditions. Interacts with ATG2 and ATG18; required for the retrieval of ATG9 from the PAS to the cytoplasmic pool. Interacts with ATG41. Interacts with the conserved oligomeric Golgi (COG) complex subunits COG3 and COG4. Interacts with TRS85. Post-translationally, phosphorylated by ATG1; phosphorylation is required for autophagy and cytoplasm to vacuole transport (Cvt) vesicle formation. Phosphorylation by ATG1 regulates ATG18 interaction and preautophagosome elongation. Phosphorylation at Ser-122 is required for selective autophagy by regulating anterograde trafficking and interaction with ATG23 and ATG27. Phosphorylation at Ser-122 prevents ubiquitination by the SCF(MET30) complex. In terms of processing, ubiquitinated by the SCF(MET30) complex in normal conditions, leading to its degradation by the proteasome, thereby preventing inappropriate induction of autophagy. Ubiquitination by the SCF(MET30) complex is prevented by phosphorylation at Ser-122.

The protein resides in the preautophagosomal structure membrane. It localises to the cytoplasmic vesicle membrane. Its subcellular location is the golgi apparatus membrane. The protein localises to the endoplasmic reticulum membrane. It is found in the mitochondrion membrane. It catalyses the reaction a 1,2-diacyl-sn-glycero-3-phosphocholine(in) = a 1,2-diacyl-sn-glycero-3-phosphocholine(out). The catalysed reaction is a 1,2-diacyl-sn-glycero-3-phospho-L-serine(in) = a 1,2-diacyl-sn-glycero-3-phospho-L-serine(out). The enzyme catalyses a 1,2-diacyl-sn-glycero-3-phosphoethanolamine(in) = a 1,2-diacyl-sn-glycero-3-phosphoethanolamine(out). It carries out the reaction a 1,2-diacyl-sn-glycero-3-phospho-(1D-myo-inositol-3-phosphate)(in) = a 1,2-diacyl-sn-glycero-3-phospho-(1D-myo-inositol-3-phosphate)(out). Functionally, phospholipid scramblase involved in autophagy and cytoplasm to vacuole transport (Cvt) vesicle formation. Cycles between the preautophagosomal structure/phagophore assembly site (PAS) and the cytoplasmic vesicle pool and supplies membrane for the growing autophagosome. Lipid scramblase activity plays a key role in preautophagosomal structure/phagophore assembly by distributing the phospholipids that arrive through ATG2 from the cytoplasmic to the luminal leaflet of the bilayer, thereby driving autophagosomal membrane expansion. Required for mitophagy. Also involved in endoplasmic reticulum-specific autophagic process and is essential for the survival of cells subjected to severe ER stress. Recruits vesicle-tethering proteins TRS85 and YPT1 to the autophagosome formation site. Also recruits ATG23 and ATG8 to the PAS. This Saccharomyces cerevisiae (strain ATCC 204508 / S288c) (Baker's yeast) protein is Autophagy-related protein 9.